We begin with the raw amino-acid sequence, 98 residues long: Cell division protein FtsB (98 aa).

The Cytoplasmic segment spans residues 1–3 (MKR). A helical membrane pass occupies residues 4–21 (LLFVLIALLAMLQYRLWL). Residues 22-98 (GDKSLADSFH…GGERGGVPEN (77 aa)) are Periplasmic-facing. Positions 31–74 (HLQEQIKLQQQSNAQLVARNQVLREEISDLRSGTEALEERARNE) form a coiled coil.

This sequence belongs to the FtsB family. In terms of assembly, part of a complex composed of FtsB, FtsL and FtsQ.

It localises to the cell inner membrane. Essential cell division protein. May link together the upstream cell division proteins, which are predominantly cytoplasmic, with the downstream cell division proteins, which are predominantly periplasmic. The polypeptide is Cell division protein FtsB (Shewanella pealeana (strain ATCC 700345 / ANG-SQ1)).